A 432-amino-acid polypeptide reads, in one-letter code: MVPERAVILAAGLGTRMGRKPKGLVRVAGREILYRTIRLLQENGVKKFIVVTNERYAPLYQEFIERHGFDAEIIINPEPEKGNGHSLHLAKEKVSGKFALTMSDHVYSRDFIERAVRGRGLIADREPRWVDIGEATKVQVKDEKVWKIGKRLKEWDAIDTGFFVLDDEIFKVTEILENEKNGDYSLSEVMERAKVSVTFVDGLGWTDVDTPEEIKRARRMLVRTAVKGTGDGFVSRHLNRRISTRVSELLVEKVTPNQMTVVTFLLGIISALTTLVSLPLAGILYQLSSILDGIDGELARAQLRTSKLGGYVDSILDRYVDGSFLALLAYATINEPIWYFVALLALLGSVMVSYSTERFRGAFCRDAYKEVPALRKLPGKRDERVFLTMLFLLYQIAASIKALFLTLAVLTNFRVALTLYFVVKKVSHPKTI.

Residues 3–225 (PERAVILAAG…RARRMLVRTA (223 aa)) form a mobA-like NTP transferase region. CTP is bound by residues 9-11 (LAA), Lys22, and Glu113. Glu113 is a Mg(2+) binding site. The interval 226–426 (VKGTGDGFVS…LTLYFVVKKV (201 aa)) is CDP-alcohol phosphatidyltransferases. Transmembrane regions (helical) follow at residues 264–284 (FLLGIISALTTLVSLPLAGIL), 337–356 (IWYFVALLALLGSVMVSYST), and 385–405 (VFLTMLFLLYQIAASIKALFL).

The protein in the N-terminal section; belongs to the MobA family. In the C-terminal section; belongs to the CDP-alcohol phosphatidyltransferase class-I family. Mg(2+) serves as cofactor.

Its subcellular location is the membrane. The catalysed reaction is 1D-myo-inositol 3-phosphate + CTP + H(+) = CDP-1L-myo-inositol + diphosphate. It carries out the reaction CDP-1L-myo-inositol + 1D-myo-inositol 3-phosphate = bis(1L-myo-inositol) 3,1'-phosphate 1-phosphate + CMP + H(+). In terms of biological role, involved in biosynthesis of di-myo-inositol phosphate (DIP), a widespread organic solute in microorganisms adapted to hot environments. Catalyzes the condensation of CTP and L-myo-inositol-1-phosphate into CDP-L-myo-inositol, as well as the biosynthesis of di-myo-inositol-1,3'-phosphate-1'-phosphate (DIPP) from CDP-L-myo-inositol and L-myo-inositol-1-phosphate. The polypeptide is Bifunctional IPC transferase and DIPP synthase (Thermococcus kodakarensis (strain ATCC BAA-918 / JCM 12380 / KOD1) (Pyrococcus kodakaraensis (strain KOD1))).